The following is a 206-amino-acid chain: Small ribosomal subunit protein uS3 (206 aa).

In terms of domain architecture, KH type-2 spans 39–107; the sequence is IRSYINESFK…SVEVNVVGVK (69 aa).

It belongs to the universal ribosomal protein uS3 family. As to quaternary structure, part of the 30S ribosomal subunit. Forms a tight complex with proteins S10 and S14.

Binds the lower part of the 30S subunit head. Binds mRNA in the 70S ribosome, positioning it for translation. The chain is Small ribosomal subunit protein uS3 from Wolbachia pipientis subsp. Culex pipiens (strain wPip).